A 153-amino-acid chain; its full sequence is Phosphoribosyl-AMP cyclohydrolase (153 aa).

Residue Asp-93 participates in Mg(2+) binding. Cys-94 contacts Zn(2+). Mg(2+) is bound by residues Asp-95 and Asp-97. Zn(2+)-binding residues include Cys-112 and Cys-119.

This sequence belongs to the PRA-CH family. As to quaternary structure, homodimer. Mg(2+) is required as a cofactor. It depends on Zn(2+) as a cofactor.

It is found in the cytoplasm. The catalysed reaction is 1-(5-phospho-beta-D-ribosyl)-5'-AMP + H2O = 1-(5-phospho-beta-D-ribosyl)-5-[(5-phospho-beta-D-ribosylamino)methylideneamino]imidazole-4-carboxamide. It participates in amino-acid biosynthesis; L-histidine biosynthesis; L-histidine from 5-phospho-alpha-D-ribose 1-diphosphate: step 3/9. Catalyzes the hydrolysis of the adenine ring of phosphoribosyl-AMP. The sequence is that of Phosphoribosyl-AMP cyclohydrolase from Mesorhizobium japonicum (strain LMG 29417 / CECT 9101 / MAFF 303099) (Mesorhizobium loti (strain MAFF 303099)).